Consider the following 270-residue polypeptide: 5'-AMP-activated protein kinase subunit beta-1 (270 aa).

The interval 1–43 is disordered; it reads MGNTSSERAALERQAGHKTPRRDSSGGTKDGDRPKILMDSPED. Gly-2 carries the N-myristoyl glycine lipid modification. Thr-4 is modified (phosphothreonine). Ser-5 and Ser-6 each carry phosphoserine. The span at 9–36 shows a compositional bias: basic and acidic residues; sequence AALERQAGHKTPRRDSSGGTKDGDRPKI. Thr-19 bears the Phosphothreonine mark. A phosphoserine; by autocatalysis mark is found at Ser-24 and Ser-25. 3 positions are modified to phosphoserine: Ser-40, Ser-96, and Ser-101. The tract at residues 68–163 is glycogen-binding domain; that stretch reads EVNEKAPAQA…QVKKTDFEVF (96 aa). Residue Ser-108 is modified to Phosphoserine; by autocatalysis. Thr-148 bears the Phosphothreonine mark. A Phosphoserine modification is found at Ser-182. Lys-201 carries the post-translational modification N6-succinyllysine.

It belongs to the 5'-AMP-activated protein kinase beta subunit family. AMPK is a heterotrimer of an alpha catalytic subunit (PRKAA1 or PRKAA2), a beta (PRKAB1 or PRKAB2) and a gamma non-catalytic subunits (PRKAG1, PRKAG2 or PRKAG3). Interacts with FNIP1 and FNIP2. In terms of processing, phosphorylated when associated with the catalytic subunit (PRKAA1 or PRKAA2). Phosphorylated by ULK1; leading to negatively regulate AMPK activity and suggesting the existence of a regulatory feedback loop between ULK1 and AMPK. As to expression, highly expressed in kidney, heart, white adipose tissue, lung and spleen.

In terms of biological role, non-catalytic subunit of AMP-activated protein kinase (AMPK), an energy sensor protein kinase that plays a key role in regulating cellular energy metabolism. In response to reduction of intracellular ATP levels, AMPK activates energy-producing pathways and inhibits energy-consuming processes: inhibits protein, carbohydrate and lipid biosynthesis, as well as cell growth and proliferation. AMPK acts via direct phosphorylation of metabolic enzymes, and by longer-term effects via phosphorylation of transcription regulators. Also acts as a regulator of cellular polarity by remodeling the actin cytoskeleton; probably by indirectly activating myosin. Beta non-catalytic subunit acts as a scaffold on which the AMPK complex assembles, via its C-terminus that bridges alpha (PRKAA1 or PRKAA2) and gamma subunits (PRKAG1, PRKAG2 or PRKAG3). This chain is 5'-AMP-activated protein kinase subunit beta-1 (Prkab1), found in Rattus norvegicus (Rat).